The chain runs to 311 residues: Acetyl-coenzyme A carboxylase carboxyl transferase subunit alpha (311 aa).

Residues 36-286 form the CoA carboxyltransferase C-terminal domain; it reads NLSKEISKVY…ANYFISELAE (251 aa).

This sequence belongs to the AccA family. Acetyl-CoA carboxylase is a heterohexamer composed of biotin carboxyl carrier protein (AccB), biotin carboxylase (AccC) and two subunits each of ACCase subunit alpha (AccA) and ACCase subunit beta (AccD).

It localises to the cytoplasm. The enzyme catalyses N(6)-carboxybiotinyl-L-lysyl-[protein] + acetyl-CoA = N(6)-biotinyl-L-lysyl-[protein] + malonyl-CoA. It participates in lipid metabolism; malonyl-CoA biosynthesis; malonyl-CoA from acetyl-CoA: step 1/1. Its function is as follows. Component of the acetyl coenzyme A carboxylase (ACC) complex. First, biotin carboxylase catalyzes the carboxylation of biotin on its carrier protein (BCCP) and then the CO(2) group is transferred by the carboxyltransferase to acetyl-CoA to form malonyl-CoA. This is Acetyl-coenzyme A carboxylase carboxyl transferase subunit alpha from Campylobacter concisus (strain 13826).